The primary structure comprises 1026 residues: Multidrug resistance protein MdtC (1026 aa).

11 consecutive transmembrane segments (helical) span residues 15 to 35, 333 to 353, 360 to 380, 387 to 407, 431 to 451, 463 to 483, 528 to 548, 853 to 873, 897 to 917, 953 to 973, and 984 to 1004; these read ILIAAAITLCGILGFRLLPVA, EVEETLAISVALVIMVVFLFL, LIPAVAVPVSLIGTFAAMYLC, LSLMALTIATGFVVDDAIVVL, VGFTVISMSLSLVAVFLPLLL, FAVTLSVAIGISLVVSLTLTP, LVGVVFLGTVALNIWLYIAIP, LILIVAAIATVYIVLGILYES, LFNAPFSLIALIGIMLLIGIV, PIMMTTLAALFGALPLVLSGG, and ITIVGGLVMSQLLTLYTTPVV.

Belongs to the resistance-nodulation-cell division (RND) (TC 2.A.6) family. MdtC subfamily. In terms of assembly, part of a tripartite efflux system composed of MdtA, MdtB and MdtC. MdtC forms a heteromultimer with MdtB.

The protein localises to the cell inner membrane. This Salmonella paratyphi C (strain RKS4594) protein is Multidrug resistance protein MdtC.